The following is a 953-amino-acid chain: Nonsense-mediated mRNA decay factor SMG8 (953 aa).

2 disordered regions span residues 571–604 (AEDA…CSQP) and 629–653 (PCFD…ESNT). A compositionally biased stretch (acidic residues) spans 573–586 (DAELDPDEEDEELP). Over residues 595 to 604 (ITQSNGCSQP) the composition is skewed to polar residues. Low complexity predominate over residues 634–653 (SSSSEAESTCSGTSSEESNT).

The protein belongs to the SMG8 family.

In terms of biological role, involved in nonsense-mediated decay (NMD) of mRNAs containing premature stop codons. Probable component of kinase complex containing nonC and recruited to stalled ribosomes. This Drosophila pseudoobscura pseudoobscura (Fruit fly) protein is Nonsense-mediated mRNA decay factor SMG8.